The primary structure comprises 226 residues: Isoprenyl transferase (226 aa).

Asp-12 is a catalytic residue. Asp-12 serves as a coordination point for Mg(2+). Substrate is bound by residues 13-16 (GNAR), Trp-17, Lys-25, His-29, and 57-59 (SFE). Asn-60 functions as the Proton acceptor in the catalytic mechanism. Residues Trp-61, Arg-63, Arg-174, and 180–182 (RIS) each bind substrate. Mg(2+) is bound at residue Glu-193.

Belongs to the UPP synthase family. Homodimer. It depends on Mg(2+) as a cofactor.

Functionally, catalyzes the condensation of isopentenyl diphosphate (IPP) with allylic pyrophosphates generating different type of terpenoids. The polypeptide is Isoprenyl transferase (Rickettsia prowazekii (strain Madrid E)).